We begin with the raw amino-acid sequence, 177 residues long: uncharacterized protein (177 aa).

This is an uncharacterized protein from Acanthamoeba polyphaga mimivirus (APMV).